Reading from the N-terminus, the 1587-residue chain is MIEPTKISILGQESIVADFGLWRNYVAKDLISGCPSTTYVLITDTNIGSIYTPSFQKSFEEAAAAVTPSPRLLTYYAPPGEVSKSRQTKADIEDWMLSQSPPCGRDTVIIALGGGVIGDLTGFVAATYMRGVRFVQVPTTLLAMVDSSIGGKTAIDTPLGKNLIGAIWQPARIYIDLEFLETLPVREFINGMAEVIKTAAISSEEEFTALEDNAETILAAVRREVKPGQRRFDGIEQILKARILASARHKAFVVSEDEREGGLRNLLNWGHSIGHAIEAILTPQILHGECVAIGMVKEAELARHLGVLKGVAVARIVKCIAAYGLPTSLKDARIRKLTAGKHCSVDQLLFNMALDKKNDGPKKKVVLLSAIGRTYEPRASVVANEDIGVVLAPSIEVFPGVSPKSTVICAPPGSKSISNRALVLAALGSGTCRIKNLLHSDDTEVMLNALERIGAATFSWEEEGEVLVVNGKGGALQAHPSELYLGNAGTASRFLTTVATLATPSNVDFSILTGNNRMKQRPIGDLVEALIANGAQVEYMESKGSLPLKIAASGGFTGGQINLAAKVSSQYVSSLLMCAPYAKEPVTLKLVGGKPISQPYIDMTTAMMRSFGIDVQKSTTEEHTYHIPQGRYTNPAEYVVESDASSATYPLAIAAVTGTTCTVPNIGSKSLQGDARFAVDVLRPMGCTVEQTDTSTTVTGPADGVLRPLPNVDMEPMTDAFLGASVLAAIARGEGSNHTTRIYGIANQRVKECNRIKAMHDELAKFGVVCREHEDGLEIDGIDRANLRQPAGGVFCYDDHRVAFSFSVLSLVAPKPTLILEKECVGKTWPGWWDTLRLKFAVKLEGRELKEAESPVLTSAEKASASVFIIGMRGAGKTTSGHWVASTLNRPFIDLDDELERIEGMTIPDIIKERGWQGFRDAELSLLQRTMKERPTGHVFACGGGVVEVPEARKLLINWHKSKGNVLLIMRDIKQVMDFLNIDKTRPAYVEDMMGVWLRRKPWFQECSNIQYYSQHASSGLTRASEDFARFVKIVTGQVDSLGAIKKKQHSFFVSLTLPDLRPAGDILEQACVGSDAVELRVDLLKDPSSSNGIPSVDYVAEQMSFLRSHTTLPLIFTIRTKSQGGFFPDEAHEEAMQLYQLAFRSGCEFVDLEIAFPDELLRTVSEMKGYSKIIASHHDPKGELSWANMSWMKYYNRALEYGDVIKLVGVATKLDDNTALRKFKSWAEEAHDVPLIAINMGDNGQLSRILNGFMTPVSHPALPFKAAPGQLSATEICKGLSLMGQIKKKRFALFGTPISESRSPALHNSLFAELGLPHEYTRLETANAEDVKEFIRAPDFGGASVTIPLKLDIMPLLDEIAPEAEIIGAVNTIVPVSDGEGKPQRLVGHNTDWQGMVQCLRNAGAYGSNGDASALVVGGGGTCRAGIYALHQMGYSPIYIVGRNLGKLQAMASTFPSSYNIRILEGNETLEHVPHVAIGTIPGDQPIDPGMREILCHMFARAEEADADAVRSIEGSPRVLLEMAYKPPVTALMQLATDAGWTTIPGLEVLVGQGFYQGGITQFQHWTGIRPLYEHARDAVLGTKAD.

The 3-dehydroquinate synthase stretch occupies residues 1–384; sequence MIEPTKISIL…YEPRASVVAN (384 aa). NAD(+) contacts are provided by residues 44–46, 81–84, 114–116, and D119; these read DTN, EVSK, and GGV. Position 130 (R130) interacts with 7-phospho-2-dehydro-3-deoxy-D-arabino-heptonate. Position 139-140 (139-140) interacts with NAD(+); that stretch reads TT. 2 residues coordinate 7-phospho-2-dehydro-3-deoxy-D-arabino-heptonate: D146 and K152. K161 contacts NAD(+). N162 is a binding site for 7-phospho-2-dehydro-3-deoxy-D-arabino-heptonate. NAD(+)-binding positions include 179 to 182 and N190; that span reads FLET. E194 is a Zn(2+) binding site. 7-phospho-2-dehydro-3-deoxy-D-arabino-heptonate-binding positions include 194-197 and K250; that span reads EVIK. The active-site Proton acceptor; for 3-dehydroquinate synthase activity is E260. Residues 264–268 and H271 each bind 7-phospho-2-dehydro-3-deoxy-D-arabino-heptonate; that span reads RNLLN. H271 provides a ligand contact to Zn(2+). H275 serves as the catalytic Proton acceptor; for 3-dehydroquinate synthase activity. Residues H287 and K356 each contribute to the 7-phospho-2-dehydro-3-deoxy-D-arabino-heptonate site. H287 is a binding site for Zn(2+). The interval 397 to 842 is EPSP synthase; it reads VFPGVSPKST…WDTLRLKFAV (446 aa). C824 functions as the For EPSP synthase activity in the catalytic mechanism. Residues 864 to 1055 are shikimate kinase; that stretch reads SASVFIIGMR…KKKQHSFFVS (192 aa). ATP is bound at residue 871–878; it reads GMRGAGKT. A 3-dehydroquinase region spans residues 1056–1276; sequence LTLPDLRPAG…AAPGQLSATE (221 aa). The Proton acceptor; for 3-dehydroquinate dehydratase activity role is filled by H1179. K1207 (schiff-base intermediate with substrate; for 3-dehydroquinate dehydratase activity) is an active-site residue. The segment at 1289–1587 is shikimate dehydrogenase; it reads KKRFALFGTP…RDAVLGTKAD (299 aa).

It in the N-terminal section; belongs to the sugar phosphate cyclases superfamily. Dehydroquinate synthase family. In the 2nd section; belongs to the EPSP synthase family. This sequence in the 3rd section; belongs to the shikimate kinase family. The protein in the 4th section; belongs to the type-I 3-dehydroquinase family. It in the C-terminal section; belongs to the shikimate dehydrogenase family. As to quaternary structure, homodimer. Requires Zn(2+) as cofactor.

Its subcellular location is the cytoplasm. The catalysed reaction is 7-phospho-2-dehydro-3-deoxy-D-arabino-heptonate = 3-dehydroquinate + phosphate. It catalyses the reaction 3-dehydroquinate = 3-dehydroshikimate + H2O. It carries out the reaction shikimate + NADP(+) = 3-dehydroshikimate + NADPH + H(+). The enzyme catalyses shikimate + ATP = 3-phosphoshikimate + ADP + H(+). The catalysed reaction is 3-phosphoshikimate + phosphoenolpyruvate = 5-O-(1-carboxyvinyl)-3-phosphoshikimate + phosphate. It participates in metabolic intermediate biosynthesis; chorismate biosynthesis; chorismate from D-erythrose 4-phosphate and phosphoenolpyruvate: step 2/7. The protein operates within metabolic intermediate biosynthesis; chorismate biosynthesis; chorismate from D-erythrose 4-phosphate and phosphoenolpyruvate: step 3/7. It functions in the pathway metabolic intermediate biosynthesis; chorismate biosynthesis; chorismate from D-erythrose 4-phosphate and phosphoenolpyruvate: step 4/7. Its pathway is metabolic intermediate biosynthesis; chorismate biosynthesis; chorismate from D-erythrose 4-phosphate and phosphoenolpyruvate: step 5/7. It participates in metabolic intermediate biosynthesis; chorismate biosynthesis; chorismate from D-erythrose 4-phosphate and phosphoenolpyruvate: step 6/7. Functionally, the AROM polypeptide catalyzes 5 consecutive enzymatic reactions in prechorismate polyaromatic amino acid biosynthesis. In Aspergillus clavatus (strain ATCC 1007 / CBS 513.65 / DSM 816 / NCTC 3887 / NRRL 1 / QM 1276 / 107), this protein is Pentafunctional AROM polypeptide.